Consider the following 325-residue polypeptide: uncharacterized protein (325 aa).

A helical transmembrane segment spans residues 10-30; sequence IVFVSLAALVLLVSVSVFIYH. The AB hydrolase-1 domain maps to 94–166; sequence KIAVVDRAGY…EIKAIIAMDI (73 aa).

It localises to the cell membrane. This is an uncharacterized protein from Bacillus subtilis (strain 168).